The chain runs to 432 residues: Tol-Pal system protein TolB (432 aa).

The first 21 residues, 1 to 21 (MKHVRIFATLLALLVISVTPA), serve as a signal peptide directing secretion.

This sequence belongs to the TolB family. The Tol-Pal system is composed of five core proteins: the inner membrane proteins TolA, TolQ and TolR, the periplasmic protein TolB and the outer membrane protein Pal. They form a network linking the inner and outer membranes and the peptidoglycan layer.

It is found in the periplasm. Part of the Tol-Pal system, which plays a role in outer membrane invagination during cell division and is important for maintaining outer membrane integrity. The polypeptide is Tol-Pal system protein TolB (Geobacter sulfurreducens (strain ATCC 51573 / DSM 12127 / PCA)).